A 284-amino-acid chain; its full sequence is L-ribulose-5-phosphate 3-epimerase UlaE (284 aa).

This sequence belongs to the L-ribulose-5-phosphate 3-epimerase family.

The catalysed reaction is L-ribulose 5-phosphate = L-xylulose 5-phosphate. It functions in the pathway cofactor degradation; L-ascorbate degradation; D-xylulose 5-phosphate from L-ascorbate: step 3/4. Its function is as follows. Catalyzes the isomerization of L-xylulose-5-phosphate to L-ribulose-5-phosphate. Is involved in the anaerobic L-ascorbate utilization. This Salmonella typhi protein is L-ribulose-5-phosphate 3-epimerase UlaE.